A 402-amino-acid polypeptide reads, in one-letter code: NADH-quinone oxidoreductase subunit D (402 aa).

Belongs to the complex I 49 kDa subunit family. As to quaternary structure, NDH-1 is composed of 14 different subunits. Subunits NuoB, C, D, E, F, and G constitute the peripheral sector of the complex.

It is found in the cell inner membrane. The enzyme catalyses a quinone + NADH + 5 H(+)(in) = a quinol + NAD(+) + 4 H(+)(out). Functionally, NDH-1 shuttles electrons from NADH, via FMN and iron-sulfur (Fe-S) centers, to quinones in the respiratory chain. The immediate electron acceptor for the enzyme in this species is believed to be ubiquinone. Couples the redox reaction to proton translocation (for every two electrons transferred, four hydrogen ions are translocated across the cytoplasmic membrane), and thus conserves the redox energy in a proton gradient. This chain is NADH-quinone oxidoreductase subunit D, found in Cereibacter sphaeroides (strain ATCC 17029 / ATH 2.4.9) (Rhodobacter sphaeroides).